Consider the following 264-residue polypeptide: Thymidylate synthase (264 aa).

Arg21 contributes to the dUMP binding site. Position 51 (His51) interacts with (6R)-5,10-methylene-5,6,7,8-tetrahydrofolate. 126 to 127 provides a ligand contact to dUMP; the sequence is RR. Cys146 serves as the catalytic Nucleophile. DUMP contacts are provided by residues 166–169, Asn177, and 207–209; these read RSAD and HLY. Asp169 contacts (6R)-5,10-methylene-5,6,7,8-tetrahydrofolate. Ala263 provides a ligand contact to (6R)-5,10-methylene-5,6,7,8-tetrahydrofolate.

It belongs to the thymidylate synthase family. Bacterial-type ThyA subfamily. As to quaternary structure, homodimer.

The protein resides in the cytoplasm. It carries out the reaction dUMP + (6R)-5,10-methylene-5,6,7,8-tetrahydrofolate = 7,8-dihydrofolate + dTMP. It functions in the pathway pyrimidine metabolism; dTTP biosynthesis. Its function is as follows. Catalyzes the reductive methylation of 2'-deoxyuridine-5'-monophosphate (dUMP) to 2'-deoxythymidine-5'-monophosphate (dTMP) while utilizing 5,10-methylenetetrahydrofolate (mTHF) as the methyl donor and reductant in the reaction, yielding dihydrofolate (DHF) as a by-product. This enzymatic reaction provides an intracellular de novo source of dTMP, an essential precursor for DNA biosynthesis. This chain is Thymidylate synthase, found in Alkalilimnicola ehrlichii (strain ATCC BAA-1101 / DSM 17681 / MLHE-1).